The following is a 510-amino-acid chain: 3,4-dihydroxyphenylacetaldehyde synthase (510 aa).

Residue N192 is part of the active site. K303 is subject to N6-(pyridoxal phosphate)lysine.

This sequence belongs to the group II decarboxylase family. Pyridoxal 5'-phosphate is required as a cofactor.

The catalysed reaction is L-dopa + O2 + H2O + H(+) = 3,4-dihydroxyphenylacetaldehyde + H2O2 + NH4(+) + CO2. Its function is as follows. Catalyzes the decarboxylation-oxidative deamination of L-3,4-dihydroxyphenylalanine (L-DOPA) to 3,4-dihydroxylphenylacetaldehyde (DHPAA). Involved in cuticle development. Probably responsible for the protein cross-linking during the development of flexible cuticles. This Drosophila melanogaster (Fruit fly) protein is 3,4-dihydroxyphenylacetaldehyde synthase (amd).